The following is a 436-amino-acid chain: 3-ketoacyl-CoA thiolase (436 aa).

C99 functions as the Acyl-thioester intermediate in the catalytic mechanism. Active-site proton acceptor residues include H392 and C422.

It belongs to the thiolase-like superfamily. Thiolase family. As to quaternary structure, heterotetramer of two alpha chains (FadJ) and two beta chains (FadI).

It localises to the cytoplasm. It carries out the reaction an acyl-CoA + acetyl-CoA = a 3-oxoacyl-CoA + CoA. It participates in lipid metabolism; fatty acid beta-oxidation. In terms of biological role, catalyzes the final step of fatty acid oxidation in which acetyl-CoA is released and the CoA ester of a fatty acid two carbons shorter is formed. The polypeptide is 3-ketoacyl-CoA thiolase (Citrobacter koseri (strain ATCC BAA-895 / CDC 4225-83 / SGSC4696)).